Reading from the N-terminus, the 121-residue chain is Small ribosomal subunit protein uS13 (121 aa).

The disordered stretch occupies residues 93 to 121; it reads RGLPMRGQRTRTNARTRKGPRKGAAALKK.

Belongs to the universal ribosomal protein uS13 family. As to quaternary structure, part of the 30S ribosomal subunit. Forms a loose heterodimer with protein S19. Forms two bridges to the 50S subunit in the 70S ribosome.

In terms of biological role, located at the top of the head of the 30S subunit, it contacts several helices of the 16S rRNA. In the 70S ribosome it contacts the 23S rRNA (bridge B1a) and protein L5 of the 50S subunit (bridge B1b), connecting the 2 subunits; these bridges are implicated in subunit movement. Contacts the tRNAs in the A and P-sites. In Acidovorax ebreus (strain TPSY) (Diaphorobacter sp. (strain TPSY)), this protein is Small ribosomal subunit protein uS13.